Consider the following 177-residue polypeptide: ATP synthase subunit delta (177 aa).

Belongs to the ATPase delta chain family. As to quaternary structure, F-type ATPases have 2 components, F(1) - the catalytic core - and F(0) - the membrane proton channel. F(1) has five subunits: alpha(3), beta(3), gamma(1), delta(1), epsilon(1). F(0) has three main subunits: a(1), b(2) and c(10-14). The alpha and beta chains form an alternating ring which encloses part of the gamma chain. F(1) is attached to F(0) by a central stalk formed by the gamma and epsilon chains, while a peripheral stalk is formed by the delta and b chains.

The protein localises to the cell inner membrane. Its function is as follows. F(1)F(0) ATP synthase produces ATP from ADP in the presence of a proton or sodium gradient. F-type ATPases consist of two structural domains, F(1) containing the extramembraneous catalytic core and F(0) containing the membrane proton channel, linked together by a central stalk and a peripheral stalk. During catalysis, ATP synthesis in the catalytic domain of F(1) is coupled via a rotary mechanism of the central stalk subunits to proton translocation. This protein is part of the stalk that links CF(0) to CF(1). It either transmits conformational changes from CF(0) to CF(1) or is implicated in proton conduction. The sequence is that of ATP synthase subunit delta from Shigella dysenteriae serotype 1 (strain Sd197).